A 608-amino-acid chain; its full sequence is 1-deoxy-D-xylulose-5-phosphate synthase (608 aa).

Thiamine diphosphate-binding positions include histidine 66 and 107–109 (GHA). Aspartate 138 provides a ligand contact to Mg(2+). Thiamine diphosphate is bound by residues 139–140 (GA), asparagine 167, phenylalanine 277, and glutamate 350. A Mg(2+)-binding site is contributed by asparagine 167.

The protein belongs to the transketolase family. DXPS subfamily. Homodimer. Mg(2+) is required as a cofactor. The cofactor is thiamine diphosphate.

The catalysed reaction is D-glyceraldehyde 3-phosphate + pyruvate + H(+) = 1-deoxy-D-xylulose 5-phosphate + CO2. It participates in metabolic intermediate biosynthesis; 1-deoxy-D-xylulose 5-phosphate biosynthesis; 1-deoxy-D-xylulose 5-phosphate from D-glyceraldehyde 3-phosphate and pyruvate: step 1/1. Catalyzes the acyloin condensation reaction between C atoms 2 and 3 of pyruvate and glyceraldehyde 3-phosphate to yield 1-deoxy-D-xylulose-5-phosphate (DXP). This Thermotoga sp. (strain RQ2) protein is 1-deoxy-D-xylulose-5-phosphate synthase.